The primary structure comprises 267 residues: Ribosomal RNA small subunit methyltransferase NEP1 (267 aa).

The tract at residues 1–46 (MSELKNGTTEPKKNETTQSDSKSKSTSTNKSSVPPASLVPVQPTAL) is disordered. The segment covering 16–32 (TTQSDSKSKSTSTNKSS) has biased composition (low complexity). Residues L195, G222, 227–229 (GKD), and 242–247 (LSDYPL) contribute to the S-adenosyl-L-methionine site.

Belongs to the class IV-like SAM-binding methyltransferase superfamily. RNA methyltransferase NEP1 family. Homodimer.

It localises to the nucleus. The protein localises to the nucleolus. The enzyme catalyses a pseudouridine in rRNA + S-adenosyl-L-methionine = an N(1)-methylpseudouridine in rRNA + S-adenosyl-L-homocysteine + H(+). Functionally, S-adenosyl-L-methionine-dependent pseudouridine N(1)-methyltransferase that methylates the pseudouridine corresponding to position 1189 (Psi1189) in S.cerevisiae 18S rRNA. Involved the biosynthesis of the hypermodified N1-methyl-N3-(3-amino-3-carboxypropyl) pseudouridine (m1acp3-Psi) conserved in eukaryotic 18S rRNA. Also has an essential role in 40S ribosomal subunit biogenesis independent on its methyltransferase activity, facilitating the incorporation of ribosomal protein S19 during the formation of pre-ribosomes. This chain is Ribosomal RNA small subunit methyltransferase NEP1, found in Candida albicans (Yeast).